The sequence spans 201 residues: Alanine--tRNA ligase (201 aa).

It belongs to the class-II aminoacyl-tRNA synthetase family. It depends on Zn(2+) as a cofactor.

The protein localises to the cytoplasm. The enzyme catalyses tRNA(Ala) + L-alanine + ATP = L-alanyl-tRNA(Ala) + AMP + diphosphate. In terms of biological role, catalyzes the attachment of alanine to tRNA(Ala) in a two-step reaction: alanine is first activated by ATP to form Ala-AMP and then transferred to the acceptor end of tRNA(Ala). Also edits incorrectly charged Ser-tRNA(Ala) and Gly-tRNA(Ala) via its editing domain. The chain is Alanine--tRNA ligase (alaS) from Rhizobium leguminosarum bv. viciae.